Reading from the N-terminus, the 704-residue chain is Mannan-binding lectin serine protease 1 (704 aa).

Residues 1–24 (MRFLSFWRLLLYHALCLALPEVSA) form the signal peptide. The region spanning 25–143 (HTVELNEMFG…TGFDAHYMAV (119 aa)) is the CUB 1 domain. The segment at 25-189 (HTVELNEMFG…HTDNRTCRVE (165 aa)) is homodimerization. The interaction with MBL2 stretch occupies residues 25-189 (HTVELNEMFG…HTDNRTCRVE (165 aa)). The interval 25–283 (HTVELNEMFG…STQTHSVQIL (259 aa)) is interaction with FCN2. An interaction with MBL1 region spans residues 25-305 (HTVELNEMFG…RLSYRAAGNE (281 aa)). An N-linked (GlcNAc...) asparagine glycan is attached at Asn-54. Positions 73, 81, 126, 128, 144, 145, and 147 each coordinate Ca(2+). The cysteines at positions 78 and 96 are disulfide-linked. In terms of domain architecture, EGF-like; calcium-binding spans 144–187 (DVDECKEREDEELSCDHYCHNYIGGYYCSCRFGYILHTDNRTCR). 4 disulfide bridges follow: Cys-148-Cys-162, Cys-158-Cys-171, Cys-173-Cys-186, and Cys-190-Cys-217. Positions 164, 165, and 168 each coordinate Ca(2+). (3R)-3-hydroxyasparagine is present on Asn-164. N-linked (GlcNAc...) asparagine glycosylation occurs at Asn-183. A CUB 2 domain is found at 190–302 (CSGNLFTQRT…RGWRLSYRAA (113 aa)). Residues Glu-240, Asp-250, Asp-287, and Ser-289 each contribute to the Ca(2+) site. A disulfide bridge connects residues Cys-247 and Cys-265. Sushi domains follow at residues 304–369 (NECP…TCKI) and 370–439 (VDCG…TCLP). 8 disulfide bridges follow: Cys-306/Cys-354, Cys-334/Cys-367, Cys-372/Cys-419, Cys-402/Cys-437, Cys-441/Cys-577, Cys-480/Cys-496, Cys-619/Cys-636, and Cys-647/Cys-677. N-linked (GlcNAc...) asparagine glycans are attached at residues Asn-390 and Asn-412. Residues 454–701 (IFNGRPAQKG…NKDWIQRITG (248 aa)) form the Peptidase S1 domain. Residues His-495 and Asp-557 each act as charge relay system in the active site. Ser-651 acts as the Charge relay system in catalysis.

It belongs to the peptidase S1 family. As to quaternary structure, homodimer. Interacts with the oligomeric lectins MBL2, FCN2 and FCN3; triggers the lectin pathway of complement through activation of C3. Interacts with SERPING1. Interacts with COLEC11; probably triggers the lectin pathway of complement. In terms of processing, the iron and 2-oxoglutarate dependent 3-hydroxylation of aspartate and asparagine is (R) stereospecific within EGF domains. Post-translationally, N-glycosylated. Some N-linked glycan are of the complex-type. Autoproteolytic processing of the proenzyme produces the active enzyme composed on the heavy and the light chain held together by a disulfide bond. Isoform 1 but not isoform 2 is activated through autoproteolytic processing. As to expression, protein of the plasma which is primarily expressed by liver.

Its subcellular location is the secreted. Its activity is regulated as follows. Inhibited by SERPING1 and A2M. Its function is as follows. Functions in the lectin pathway of complement, which performs a key role in innate immunity by recognizing pathogens through patterns of sugar moieties and neutralizing them. The lectin pathway is triggered upon binding of mannan-binding lectin (MBL) and ficolins to sugar moieties which leads to activation of the associated proteases MASP1 and MASP2. Functions as an endopeptidase and may activate MASP2 or C2 or directly activate C3 the key component of complement reaction. Isoform 2 may have an inhibitory effect on the activation of the lectin pathway of complement or may cleave IGFBP5. Also plays a role in development. The chain is Mannan-binding lectin serine protease 1 (Masp1) from Mus musculus (Mouse).